We begin with the raw amino-acid sequence, 149 residues long: Leghemoglobin (149 aa).

A Globin domain is found at 3–147 (AFSEKQESLV…LAAAIKKAMG (145 aa)). Tyr31 carries the post-translational modification Nitrated tyrosine. Ser46 is a binding site for heme b. Ser46 is subject to Phosphoserine. An O2-binding site is contributed by His62. Positions 65, 94, and 97 each coordinate heme b. A Nitrated tyrosine modification is found at Tyr135.

This sequence belongs to the plant globin family. As to quaternary structure, monomer. Nitrated in effective nodules and particularly in hypoxic conditions; this mechanism may play a protective role in the symbiosis by buffering toxic peroxynitrite NO(2)(-). Nitration level decrease during nodule senescence. In terms of processing, phosphorylation at Ser-46 disrupts the molecular environment of its porphyrin ring oxygen binding pocket, thus leading to a reduced oxygen consumption and to the delivery of oxygen O(2) to symbiosomes. As to expression, root nodules.

It localises to the cytoplasm. Its subcellular location is the cytosol. The protein resides in the nucleus. Functionally, leghemoglobin that reversibly binds oxygen O(2) through a pentacoordinated heme iron. In root nodules, facilitates the diffusion of oxygen to the bacteroids while preventing the bacterial nitrogenase from being inactivated by buffering dioxygen, nitric oxide and carbon monoxide, and promoting the formation of reactive oxygen species (ROS, e.g. H(2)O(2)). This role is essential for symbiotic nitrogen fixation (SNF). The polypeptide is Leghemoglobin (Canavalia lineata (Beach bean)).